We begin with the raw amino-acid sequence, 141 residues long: Cystatin (141 aa).

A signal peptide spans 1-26 (MVHSQLPVAAPLRLLCALLLLPSATM). Residues 29–129 (GGLYPRSVTD…CHFQVWSRPW (101 aa)) enclose the Cystatin domain. The short motif at 73 to 77 (QVVTG) is the Secondary area of contact element. 2 cysteine pairs are disulfide-bonded: Cys-91–Cys-107 and Cys-120–Cys-140.

It belongs to the cystatin family. In terms of tissue distribution, expressed by the venom gland at an extremely low level (at protein level).

It is found in the secreted. Functionally, inhibits various C1 cysteine proteases including cathepsin L, papain and cathepsin B. This protein has no toxic activity and its function in the venom is unknown. It may play a role as a housekeeping or regulatory protein. The sequence is that of Cystatin from Tropidechis carinatus (Australian rough-scaled snake).